A 343-amino-acid chain; its full sequence is MKFVDSASIFVQAGEGGRGCVSFRREKFVPKGGPDGGDGGNGGNVWLRTNSHLTTLLDFKYRKKYLAPRGSHGQGSRKSGRKGADIYIDVPCGTLVRNAATQELLADMTGDGEEVMIARGGHGGRGNQHFATSTNQAPRRSEPGWKGEELQLDMELKLMADVGLVGFPNAGKSTLISVLSAARPKIADYPFTTLVPNLGIVRYEEYKSFVMADIPGIIEGAAEGRGLGLQFLRHIERTKILAVLVSADAEDVEAEYQTLVGELEKFGRGLDEKPRILVVTKMDIAPEDFTLPAPGDEVHVLAISSVAGMGLKELKDELWREVSMRDRPEESSDPEGEGDGGTP.

The region spanning 1–159 (MKFVDSASIF…LQLDMELKLM (159 aa)) is the Obg domain. Positions 121 to 144 (GHGGRGNQHFATSTNQAPRRSEPG) are disordered. Over residues 129–138 (HFATSTNQAP) the composition is skewed to polar residues. Residues 160 to 323 (ADVGLVGFPN…LKDELWREVS (164 aa)) enclose the OBG-type G domain. Residues 166–173 (GFPNAGKS), 191–195 (FTTLV), 213–216 (DIPG), 280–283 (TKMD), and 304–306 (SSV) each bind GTP. Mg(2+)-binding residues include Ser-173 and Thr-193. The segment at 322-343 (VSMRDRPEESSDPEGEGDGGTP) is disordered. Positions 331–343 (SSDPEGEGDGGTP) are enriched in acidic residues.

The protein belongs to the TRAFAC class OBG-HflX-like GTPase superfamily. OBG GTPase family. Monomer. Mg(2+) serves as cofactor.

It is found in the cytoplasm. Its function is as follows. An essential GTPase which binds GTP, GDP and possibly (p)ppGpp with moderate affinity, with high nucleotide exchange rates and a fairly low GTP hydrolysis rate. Plays a role in control of the cell cycle, stress response, ribosome biogenesis and in those bacteria that undergo differentiation, in morphogenesis control. This Chlorobium luteolum (strain DSM 273 / BCRC 81028 / 2530) (Pelodictyon luteolum) protein is GTPase Obg.